Reading from the N-terminus, the 603-residue chain is Bifunctional 3-dehydroquinate dehydratase/shikimate dehydrogenase, chloroplastic (603 aa).

Residues 1–10 (MAASSTNARL) are compositionally biased toward polar residues. Residues 1-22 (MAASSTNARLTNPPRLLSKPRL) form a disordered region. The N-terminal 66 residues, 1–66 (MAASSTNARL…VVFSDQRRRR (66 aa)), are a transit peptide targeting the chloroplast. A compositionally biased stretch (low complexity) spans 13–22 (PPRLLSKPRL). The tract at residues 96–313 (ICAPVMADSI…QPTIKDLLDL (218 aa)) is 3-dehydroquinate dehydratase. Residues Glu-124, Arg-126, and Arg-155 each coordinate 3-dehydroshikimate. Residue His-214 is the Proton acceptor; for 3-dehydroquinate dehydratase activity of the active site. Residues Lys-241, Arg-279, Ser-300, and Gln-304 each coordinate 3-dehydroshikimate. The active-site Schiff-base intermediate with substrate; for 3-dehydroquinate dehydratase activity is the Lys-241. The interval 328–558 (IIGKPVSHSK…VYTPRITRLL (231 aa)) is shikimate dehydrogenase. Shikimate contacts are provided by Ser-336, Ser-338, Thr-381, Lys-385, Asn-406, and Asp-423. Lys-385 functions as the For shikimate dehydrogenase activity in the catalytic mechanism. Asp-423 serves as the catalytic For shikimate dehydrogenase activity. Ala-461, Gly-463, Ala-464, Asn-483, Thr-485, Arg-488, Met-525, and Ala-548 together coordinate NADP(+). Shikimate is bound at residue Tyr-550. Position 571 (Gly-571) interacts with NADP(+). Shikimate-binding residues include Gln-578 and Gln-582.

The protein in the N-terminal section; belongs to the type-I 3-dehydroquinase family. In the C-terminal section; belongs to the shikimate dehydrogenase family. As to quaternary structure, monomer.

Its subcellular location is the plastid. It is found in the chloroplast. It carries out the reaction 3-dehydroquinate = 3-dehydroshikimate + H2O. The catalysed reaction is shikimate + NADP(+) = 3-dehydroshikimate + NADPH + H(+). It functions in the pathway metabolic intermediate biosynthesis; chorismate biosynthesis; chorismate from D-erythrose 4-phosphate and phosphoenolpyruvate: step 3/7. Its pathway is metabolic intermediate biosynthesis; chorismate biosynthesis; chorismate from D-erythrose 4-phosphate and phosphoenolpyruvate: step 4/7. Its function is as follows. Bifunctional dehydroquinate dehydratase-shikimate dehydrogenase enzyme that catalyzes two steps in the chorismate biosynthesis pathway. The protein is Bifunctional 3-dehydroquinate dehydratase/shikimate dehydrogenase, chloroplastic of Arabidopsis thaliana (Mouse-ear cress).